The following is a 303-amino-acid chain: ATP synthase gamma chain (303 aa).

It belongs to the ATPase gamma chain family. F-type ATPases have 2 components, CF(1) - the catalytic core - and CF(0) - the membrane proton channel. CF(1) has five subunits: alpha(3), beta(3), gamma(1), delta(1), epsilon(1). CF(0) has three main subunits: a, b and c.

The protein resides in the cell inner membrane. Produces ATP from ADP in the presence of a proton gradient across the membrane. The gamma chain is believed to be important in regulating ATPase activity and the flow of protons through the CF(0) complex. In Elusimicrobium minutum (strain Pei191), this protein is ATP synthase gamma chain.